The sequence spans 122 residues: Large ribosomal subunit protein uL14c (122 aa).

It belongs to the universal ribosomal protein uL14 family. In terms of assembly, part of the 50S ribosomal subunit.

It localises to the plastid. The protein resides in the chloroplast. Binds to 23S rRNA. In Cucumis sativus (Cucumber), this protein is Large ribosomal subunit protein uL14c.